A 109-amino-acid chain; its full sequence is Aquaporin-2 (109 aa).

Over 1–6 (SIAFSK) the chain is Cytoplasmic. Residues 7 to 27 (AVFSEFLATLLFVFFGLGSAL) traverse the membrane as a helical segment. Topologically, residues 28–35 (NWPQALPS) are extracellular. The helical transmembrane segment at 36-54 (GLQIAMAFGLAIGTLVQTL) threads the bilayer. Residues 55-59 (GHISG) are Cytoplasmic-facing. An intramembrane region (discontinuously helical) is located at residues 60–69 (AHINPAVTVA). The NPA 1 motif lies at 63–65 (NPA). At 70–80 (CLVGCHVSFLR) the chain is on the cytoplasmic side. The chain crosses the membrane as a helical span at residues 81-102 (AIFYVAAQLLGAVAGAALLHEL). Residues 103–109 (TPPDIRG) are Extracellular-facing.

The protein belongs to the MIP/aquaporin (TC 1.A.8) family. In terms of assembly, homotetramer. Post-translationally, serine phosphorylation is necessary and sufficient for expression at the apical membrane. Endocytosis is not phosphorylation-dependent. N-glycosylated.

It is found in the apical cell membrane. The protein localises to the basolateral cell membrane. The protein resides in the cell membrane. It localises to the cytoplasmic vesicle membrane. Its subcellular location is the golgi apparatus. It is found in the trans-Golgi network membrane. The catalysed reaction is H2O(in) = H2O(out). It catalyses the reaction glycerol(in) = glycerol(out). Functionally, forms a water-specific channel that provides the plasma membranes of renal collecting duct with high permeability to water, thereby permitting water to move in the direction of an osmotic gradient. Plays an essential role in renal water homeostasis. Could also be permeable to glycerol. The sequence is that of Aquaporin-2 from Orycteropus afer (Aardvark).